The sequence spans 108 residues: Insertion element IS629 uncharacterized 12 kDa protein S4062 (108 aa).

It belongs to the transposase 8 family.

The polypeptide is Insertion element IS629 uncharacterized 12 kDa protein S4062 (Shigella flexneri).